The primary structure comprises 379 residues: Tubulin--tyrosine ligase (379 aa).

The 368-residue stretch at 3–370 folds into the TTL domain; that stretch reads TFVVRDENSS…PPDAEQQQQQ (368 aa).

This sequence belongs to the tubulin--tyrosine ligase family. Monomer. It depends on Mg(2+) as a cofactor. K(+) serves as cofactor.

It carries out the reaction C-terminal L-alpha-aminoacyl-L-glutamyl-L-glutamyl-[tubulin] + L-tyrosine + ATP = C-terminal L-alpha-aminoacyl-L-glutamyl-L-glutamyl-L-tyrosyl-[tubulin] + ADP + phosphate + H(+). Functionally, catalyzes the post-translational addition of a tyrosine to the C-terminal end of detyrosinated alpha-tubulin. In Sus scrofa (Pig), this protein is Tubulin--tyrosine ligase (TTL).